A 63-amino-acid polypeptide reads, in one-letter code: uncharacterized protein (63 aa).

This is an uncharacterized protein from Bacillus subtilis (strain 168).